The primary structure comprises 634 residues: Extracellular metalloproteinase mep (634 aa).

The first 18 residues, 1 to 18, serve as a signal peptide directing secretion; that stretch reads MRGLLLAGALALPASVFA. The propeptide occupies 19–245; that stretch reads HPAHQSYGLN…IHGVVDYVAE (227 aa). The N-linked (GlcNAc...) asparagine glycan is linked to asparagine 286. Histidine 429 is a Zn(2+) binding site. Glutamate 430 is a catalytic residue. Histidine 433 is a Zn(2+) binding site.

Belongs to the peptidase M36 family. The cofactor is Zn(2+).

Its subcellular location is the secreted. Its function is as follows. Secreted metalloproteinase that allows assimilation of proteinaceous substrates and probably acts as a virulence factor. The chain is Extracellular metalloproteinase mep (mep) from Aspergillus fumigatus (strain CBS 144.89 / FGSC A1163 / CEA10) (Neosartorya fumigata).